The following is a 37-amino-acid chain: Omega/M-ectatotoxin-Et1a subunit A (37 aa).

A disulfide bond links C12 and C34.

It belongs to the ectatomin family. Ectatomin-Et subfamily. Heterodimer of an A and a B chain; disulfide-linked. In terms of tissue distribution, expressed by the venom gland.

The protein resides in the secreted. The protein localises to the target cell membrane. In terms of biological role, algogenic for animals, human and insects. At high concentrations (0.5-1 uM), it acts as a pore-forming protein that forms nonselective cation channels both in cell and artificial membranes. It is weakly selective for cation over anions channel conductance is identical in both directions. At lower concentrations (1-10 nM), this heterodimer inhibits cardiac L-type calcium currents in isolated rat cardiac ventricular myocytes. The sequence is that of Omega/M-ectatotoxin-Et1a subunit A from Ectatomma tuberculatum (Selva ant).